The sequence spans 952 residues: Protein translocase subunit SecA (952 aa).

ATP is bound by residues Gln135, 153 to 157 (GEGKT), and Asp575. Basic and acidic residues predominate over residues 614–624 (RHESRRIDNQL). Disordered stretches follow at residues 614–636 (RHES…DPGS) and 916–946 (VSAK…GKKY). Cys938, Cys940, Cys949, and Cys950 together coordinate Zn(2+).

The protein belongs to the SecA family. Monomer and homodimer. Part of the essential Sec protein translocation apparatus which comprises SecA, SecYEG and auxiliary proteins SecDF. Other proteins may also be involved. It depends on Zn(2+) as a cofactor.

The protein localises to the cell membrane. Its subcellular location is the cytoplasm. It catalyses the reaction ATP + H2O + cellular proteinSide 1 = ADP + phosphate + cellular proteinSide 2.. Its function is as follows. Part of the Sec protein translocase complex. Interacts with the SecYEG preprotein conducting channel. Has a central role in coupling the hydrolysis of ATP to the transfer of proteins into and across the cell membrane, serving as an ATP-driven molecular motor driving the stepwise translocation of polypeptide chains across the membrane. In Dehalococcoides mccartyi (strain ATCC BAA-2100 / JCM 16839 / KCTC 5957 / BAV1), this protein is Protein translocase subunit SecA.